Consider the following 665-residue polypeptide: DNA ligase (665 aa).

NAD(+) contacts are provided by residues 31-35 (DKEFD), 80-81 (SL), and E110. Catalysis depends on K112, which acts as the N6-AMP-lysine intermediate. NAD(+) is bound by residues R133, E170, K285, and K309. 4 residues coordinate Zn(2+): C403, C406, C421, and C427. The region spanning 587–665 (GHTDKLAGQS…NEEEFLKLIS (79 aa)) is the BRCT domain.

This sequence belongs to the NAD-dependent DNA ligase family. LigA subfamily. Requires Mg(2+) as cofactor. The cofactor is Mn(2+).

It carries out the reaction NAD(+) + (deoxyribonucleotide)n-3'-hydroxyl + 5'-phospho-(deoxyribonucleotide)m = (deoxyribonucleotide)n+m + AMP + beta-nicotinamide D-nucleotide.. Functionally, DNA ligase that catalyzes the formation of phosphodiester linkages between 5'-phosphoryl and 3'-hydroxyl groups in double-stranded DNA using NAD as a coenzyme and as the energy source for the reaction. It is essential for DNA replication and repair of damaged DNA. The sequence is that of DNA ligase from Bacteroides fragilis (strain ATCC 25285 / DSM 2151 / CCUG 4856 / JCM 11019 / LMG 10263 / NCTC 9343 / Onslow / VPI 2553 / EN-2).